Consider the following 436-residue polypeptide: GTPase Der (436 aa).

EngA-type G domains follow at residues Pro-4–Glu-167 and Ile-175–Asn-351. GTP is bound by residues Gly-10 to Ser-17, Asp-57 to Ile-61, Asn-119 to Asp-122, Gly-181 to Ser-188, Asp-229 to Met-233, and Asn-294 to Asp-297. Residues Lys-352–Lys-436 enclose the KH-like domain.

The protein belongs to the TRAFAC class TrmE-Era-EngA-EngB-Septin-like GTPase superfamily. EngA (Der) GTPase family. As to quaternary structure, associates with the 50S ribosomal subunit.

In terms of biological role, GTPase that plays an essential role in the late steps of ribosome biogenesis. In Streptococcus pyogenes serotype M28 (strain MGAS6180), this protein is GTPase Der.